Here is a 907-residue protein sequence, read N- to C-terminus: Nuclear receptor coactivator 7 (907 aa).

Positions 1-12 are enriched in basic and acidic residues; sequence METKEEKKERRQ. Residues 1-29 adopt a coiled-coil conformation; the sequence is METKEEKKERRQGYFARLKKKRQAKQNTE. Disordered stretches follow at residues 1–51, 63–83, and 99–121; these read METK…DDES, DNCK…RKKK, and YSTD…SQKP. Residues 25 to 41 show a composition bias toward polar residues; it reads KQNTETVSANSPGSPVS. Composition is skewed to basic and acidic residues over residues 68–78 and 99–116; these read AGEKETVPEKE and YSTD…EKKM. In terms of domain architecture, LysM spans 125–168; sequence IEYTAGNQDTINSIALKFNITPNKLVELNKLFTHTIVPGQILFV. Disordered stretches follow at residues 335–373 and 401–443; these read LSKE…QSSE and DPHV…MDRG. A compositionally biased stretch (basic and acidic residues) spans 401–422; it reads DPHVKEPSEEKNVSDIRTKEDS. In terms of domain architecture, TLDc spans 746–907; sequence ALLENMHIEQ…IQDVEVWTFE (162 aa).

The protein belongs to the OXR1 family.

Its subcellular location is the nucleus. In terms of biological role, enhances the transcriptional activities of several nuclear receptors. This chain is Nuclear receptor coactivator 7 (NCOA7), found in Gallus gallus (Chicken).